Reading from the N-terminus, the 90-residue chain is Putative septation protein SpoVG (90 aa).

This sequence belongs to the SpoVG family.

Functionally, could be involved in septation. This chain is Putative septation protein SpoVG, found in Clostridium perfringens (strain ATCC 13124 / DSM 756 / JCM 1290 / NCIMB 6125 / NCTC 8237 / Type A).